Reading from the N-terminus, the 417-residue chain is Argininosuccinate synthase (417 aa).

9 to 17 is an ATP binding site; sequence AYSGGLDTS. Tyr87 is a binding site for L-citrulline. Gly117 lines the ATP pocket. The L-aspartate site is built by Thr119, Asn123, and Asp124. Position 123 (Asn123) interacts with L-citrulline. L-citrulline is bound by residues Arg127, Ser175, Ser184, Glu260, and Tyr272.

The protein belongs to the argininosuccinate synthase family. Type 1 subfamily. Homotetramer.

It is found in the cytoplasm. It catalyses the reaction L-citrulline + L-aspartate + ATP = 2-(N(omega)-L-arginino)succinate + AMP + diphosphate + H(+). The protein operates within amino-acid biosynthesis; L-arginine biosynthesis; L-arginine from L-ornithine and carbamoyl phosphate: step 2/3. The chain is Argininosuccinate synthase from Oceanobacillus iheyensis (strain DSM 14371 / CIP 107618 / JCM 11309 / KCTC 3954 / HTE831).